We begin with the raw amino-acid sequence, 310 residues long: Cysteine synthase (310 aa).

An N6-(pyridoxal phosphate)lysine modification is found at Lys-46. Pyridoxal 5'-phosphate contacts are provided by residues Asn-76, 180 to 184 (GTGGT), and Ser-268.

It belongs to the cysteine synthase/cystathionine beta-synthase family. As to quaternary structure, homodimer. The cofactor is pyridoxal 5'-phosphate.

It catalyses the reaction O-acetyl-L-serine + hydrogen sulfide = L-cysteine + acetate. Its pathway is amino-acid biosynthesis; L-cysteine biosynthesis; L-cysteine from L-serine: step 2/2. The protein is Cysteine synthase (cysK) of Staphylococcus epidermidis (strain ATCC 35984 / DSM 28319 / BCRC 17069 / CCUG 31568 / BM 3577 / RP62A).